A 129-amino-acid polypeptide reads, in one-letter code: Small ribosomal subunit protein uS12 (129 aa).

Positions Arg110–Lys129 are disordered.

The protein belongs to the universal ribosomal protein uS12 family. As to quaternary structure, part of the 30S ribosomal subunit. Contacts proteins S8 and S17. May interact with IF1 in the 30S initiation complex.

With S4 and S5 plays an important role in translational accuracy. Its function is as follows. Interacts with and stabilizes bases of the 16S rRNA that are involved in tRNA selection in the A site and with the mRNA backbone. Located at the interface of the 30S and 50S subunits, it traverses the body of the 30S subunit contacting proteins on the other side and probably holding the rRNA structure together. The combined cluster of proteins S8, S12 and S17 appears to hold together the shoulder and platform of the 30S subunit. The polypeptide is Small ribosomal subunit protein uS12 (Rickettsia prowazekii (strain Madrid E)).